Reading from the N-terminus, the 317-residue chain is MKPLKIIFAGTPDFAAQHLQALLNSHHQVIAVYTQPDKPAGRGKKLQASPVKQLAEQYNIPVYQPKSLRKEEAQAQFAQLQADVMVVVAYGLILPKAVLEMPRLGCLNVHGSILPRWRGAAPIQRAIWAGDKQTGVTIMQMDEGLDTGDMLHKVYCDITAEETSASLYHKLATLAPPALIDVLDELESGKFIAEKQEDSKSNYAEKLSKEEAKLDWSLSAAQLERNIRAFNPAPVAFLTVPVNEAEERIKVYRAEVLPHQNSAAGTVLAFDKKGLRIATAEGVLNIQQLQPSGKKPMSVQDFLNGRADWFVLGQVLN.

Position 112-115 (112-115 (SILP)) interacts with (6S)-5,6,7,8-tetrahydrofolate.

Belongs to the Fmt family.

The enzyme catalyses L-methionyl-tRNA(fMet) + (6R)-10-formyltetrahydrofolate = N-formyl-L-methionyl-tRNA(fMet) + (6S)-5,6,7,8-tetrahydrofolate + H(+). Its function is as follows. Attaches a formyl group to the free amino group of methionyl-tRNA(fMet). The formyl group appears to play a dual role in the initiator identity of N-formylmethionyl-tRNA by promoting its recognition by IF2 and preventing the misappropriation of this tRNA by the elongation apparatus. The chain is Methionyl-tRNA formyltransferase from Mannheimia succiniciproducens (strain KCTC 0769BP / MBEL55E).